The sequence spans 179 residues: NADH dehydrogenase [ubiquinone] 1 beta subcomplex subunit 9 (179 aa).

The residue at position 2 (alanine 2) is an N-acetylalanine. At serine 85 the chain carries Phosphoserine. Positions 139 to 160 are disordered; it reads QLQEETPVGGPRTEALPPARKQ.

Belongs to the complex I LYR family. As to quaternary structure, mammalian complex I is composed of 45 different subunits.

Its subcellular location is the mitochondrion inner membrane. Functionally, accessory subunit of the mitochondrial membrane respiratory chain NADH dehydrogenase (Complex I), that is believed to be not involved in catalysis. Complex I functions in the transfer of electrons from NADH to the respiratory chain. The immediate electron acceptor for the enzyme is believed to be ubiquinone. The polypeptide is NADH dehydrogenase [ubiquinone] 1 beta subcomplex subunit 9 (NDUFB9) (Bos taurus (Bovine)).